We begin with the raw amino-acid sequence, 519 residues long: Ribonuclease Y (519 aa).

Residues 3-23 (LIEIVLLLVGMAVGAATGFIL) form a helical membrane-spanning segment. One can recognise a KH domain in the interval 209 to 272 (TVTAVSLPSE…QIAKMALERL (64 aa)). An HD domain is found at 335–428 (VLQHSMEVAS…VQAADSLSGA (94 aa)).

It belongs to the RNase Y family.

The protein resides in the cell membrane. In terms of biological role, endoribonuclease that initiates mRNA decay. In Oleidesulfovibrio alaskensis (strain ATCC BAA-1058 / DSM 17464 / G20) (Desulfovibrio alaskensis), this protein is Ribonuclease Y.